The sequence spans 201 residues: Small ribosomal subunit protein uS2 (201 aa).

Belongs to the universal ribosomal protein uS2 family.

The chain is Small ribosomal subunit protein uS2 from Nanoarchaeum equitans (strain Kin4-M).